The primary structure comprises 457 residues: MREIIHISTGQCGNQIGAAFWETICGEHGLDFNGTYHGHDDIQKERLNVYFNEASSGKWVPRSINVDLEPGTIDAVRNSAIGNLFRPDNYIFGQSSAGNVWAKGHYTEGAELVDSVMDVIRREAEGCDSLQGFQITHSLGGGTGSGMGTLLISKIREEFPDRMMATFSVLPSPKTSDTVVEPYNATLSVHQLVEHSDETFCIDNEALYDICQRTLKLNQPSYGDLNNLVSSVMSGVTTSLRYPGQLNSDLRKLAVNLVPFPRLHFFMVGYAPLTAIGSQSFRSLTVPELTQQMFDAKNMMAAADPRNGRYLTVAAFFRGKVSVKEVEDEMHKVQSKNSDYFVEWIPNNVQTAVCSVAPQGLDMAATFIANSTSIQELFKRVGDQFSAMFKRKAFLHWYTSEGMDELEFSEAESNMNDLVSEYQQYQEATVEDDEEVDENGDFGAPQNQDEPITENFE.

Gln-11, Glu-69, Ser-138, Gly-142, Thr-143, Gly-144, Asn-204, and Asn-226 together coordinate GTP. Glu-69 contacts Mg(2+). Phosphoserine occurs at positions 278 and 280. Residues 423 to 457 are disordered; the sequence is QQYQEATVEDDEEVDENGDFGAPQNQDEPITENFE. The segment covering 429 to 440 has biased composition (acidic residues); that stretch reads TVEDDEEVDENG.

This sequence belongs to the tubulin family. Dimer of alpha and beta chains. A typical microtubule is a hollow water-filled tube with an outer diameter of 25 nm and an inner diameter of 15 nM. Alpha-beta heterodimers associate head-to-tail to form protofilaments running lengthwise along the microtubule wall with the beta-tubulin subunit facing the microtubule plus end conferring a structural polarity. Microtubules usually have 13 protofilaments but different protofilament numbers can be found in some organisms and specialized cells. Mg(2+) is required as a cofactor.

It is found in the cytoplasm. The protein resides in the cytoskeleton. Tubulin is the major constituent of microtubules, a cylinder consisting of laterally associated linear protofilaments composed of alpha- and beta-tubulin heterodimers. Microtubules grow by the addition of GTP-tubulin dimers to the microtubule end, where a stabilizing cap forms. Below the cap, tubulin dimers are in GDP-bound state, owing to GTPase activity of alpha-tubulin. The sequence is that of Tubulin beta chain (TUB2) from Saccharomyces cerevisiae (strain ATCC 204508 / S288c) (Baker's yeast).